Reading from the N-terminus, the 92-residue chain is UPF0250 protein VV0902 (92 aa).

This sequence belongs to the UPF0250 family.

This Vibrio vulnificus (strain YJ016) protein is UPF0250 protein VV0902.